A 5088-amino-acid chain; its full sequence is Replicase polyprotein 1ab (5088 aa).

The chain crosses the membrane as a helical span at residues 26 to 46 (VTNVIQYWTPILTMLLLAIYI). Residues 301-323 (EIEDDTEAEETQKTKRKGKLQPQ) are disordered. A run of 5 helical transmembrane segments spans residues 343–363 (HLTFGPAYMTMLCLISIMSPT), 1132–1152 (GLFLMLYIAALIIILAIAITI), 1156–1176 (TMMMFLKLITIFAYTFGHLLL), 1201–1221 (YGCLLMLGALAIAVIDLLAYI), and 1250–1270 (ILIPYIFTSYGLVLTIIVSYV). Catalysis depends on for 3C-like proteinase residues His1434 and Cys1539. The next 2 helical transmembrane spans lie at 1729–1749 (FTHTHPAFYIAAACVFGLFFV) and 1758–1778 (ILSSIIFAIPHIYVNYYYGLV). Residues 3093 to 3112 (KPNCPMVPSEVPVRNKHKSA) form a disordered region. The ExoN domain occupies 4351 to 4616 (MNIVMDDCIC…MTQCIYQSFV (266 aa)). Residues Asp4362, Glu4364, and Asp4481 contribute to the active site. Cys4498, Cys4504, Cys4522, and His4525 together coordinate Zn(2+). Catalysis depends on residues His4599, Asp4604, Lys4880, Asp4969, Lys4998, and Glu5035. The Nidovirus-type SAM-dependent 2'-O-MTase domain maps to 4844–5088 (LNNHAALAKA…RQSVFRYSPK (245 aa)).

As to quaternary structure, homodimer. Specific enzymatic cleavages in vivo by its own protease yield mature proteins. 3CL-PRO is autocatalytically processed.

It localises to the membrane. The catalysed reaction is a 5'-end (5'-triphosphoguanosine)-ribonucleoside in mRNA + S-adenosyl-L-methionine = a 5'-end (N(7)-methyl 5'-triphosphoguanosine)-ribonucleoside in mRNA + S-adenosyl-L-homocysteine. The enzyme catalyses RNA(n) + a ribonucleoside 5'-triphosphate = RNA(n+1) + diphosphate. It catalyses the reaction ATP + H2O = ADP + phosphate + H(+). It carries out the reaction a 5'-end (N(7)-methyl 5'-triphosphoguanosine)-ribonucleoside in mRNA + S-adenosyl-L-methionine = a 5'-end (N(7)-methyl 5'-triphosphoguanosine)-(2'-O-methyl-ribonucleoside) in mRNA + S-adenosyl-L-homocysteine + H(+). Cysteine protease responsible for the majority of cleavages of the polyprotein. Recognizes substrates containing the core sequence [NT]-[EHKQSY]-|-[AGNST]. Its function is as follows. The helicase which contains a zinc finger structure displays RNA and DNA duplex-unwinding activities with 5' to 3' polarity. Functionally, RNA-directed RNA polymerase that catalyzes the transcription of viral genomic and subgenomic RNAs. In terms of biological role, catalyzes the RNA N7-guanylyltransferase reaction to methylate the core cap structure GpppN-RNA into the type-0 cap (m)GpppN-RNA. The protein is Replicase polyprotein 1ab of Ochlerotatus harrisoni (CAVV).